The following is a 1179-amino-acid chain: ATP-dependent helicase/deoxyribonuclease subunit B (1179 aa).

It belongs to the helicase family. AddB/RexB type 2 subfamily. Heterodimer of AddA and RexB. The cofactor is Mg(2+).

In terms of biological role, the heterodimer acts as both an ATP-dependent DNA helicase and an ATP-dependent, dual-direction single-stranded exonuclease. Recognizes the chi site generating a DNA molecule suitable for the initiation of homologous recombination. This subunit has 5' -&gt; 3' nuclease activity but not helicase activity. This Lacticaseibacillus casei (strain BL23) (Lactobacillus casei) protein is ATP-dependent helicase/deoxyribonuclease subunit B.